The following is a 3341-amino-acid chain: Genome polyprotein (3341 aa).

2 stretches are compositionally biased toward basic and acidic residues: residues 1–14 (MKRK…KAPG) and 24–35 (REGRRKDKDKGG). Residues 1-57 (MKRKDLEARGKAPGRDSSTPFWGREGRRKDKDKGGESPSNRQVTLKTPIQSGRRAGK) form a disordered region. At 1–120 (MKRKDLEARG…LESRRTTGNP (120 aa)) the chain is on the cytoplasmic side. The segment covering 37-50 (SPSNRQVTLKTPIQ) has biased composition (polar residues). Positions 55 to 97 (AGKRQRVGLLGRLGVGWGSFLQEDIVQALIHMALVLHALFASI) are hydrophobic; homodimerization of capsid protein C. A propeptide spans 117 to 136 (TGNPMTLAFILGFLTVLCGC) (ER anchor for the capsid protein C, removed in mature form by serine protease NS3). A helical membrane pass occupies residues 121–141 (MTLAFILGFLTVLCGCVVIDM). Residues 142-245 (QVSTTRGTEI…AFKTIRENKT (104 aa)) are Extracellular-facing. N-linked (GlcNAc...) asparagine; by host glycosylation is found at Asn-157 and Asn-243. A helical membrane pass occupies residues 246-262 (IFIVALLCVAIAKRWPT). A topological domain (cytoplasmic) is located at residue Trp-263. Residues 264–278 (VVILLAIGTWTTVKG) traverse the membrane as a helical segment. The Extracellular segment spans residues 279–665 (EFVEPLYTLK…GVWQDLVGKF (387 aa)). N-linked (GlcNAc...) asparagine; by host glycosylation occurs at Asn-339. Residues 371-384 (NRGWGTGCFKWGIG) form an involved in fusion region. Asn-399, Asn-411, Asn-575, and Asn-611 each carry an N-linked (GlcNAc...) asparagine; by host glycan. A helical membrane pass occupies residues 666-686 (SVGAFFSNTALLVILVLAALI). Residues 687–689 (DKR) are Cytoplasmic-facing. Residues 690–705 (IAFLLVLGGYFYYVRA) form a helical membrane-spanning segment. The Extracellular portion of the chain corresponds to 706-1138 (DLGCGIDTTR…AKTRTSTLTR (433 aa)). 4 N-linked (GlcNAc...) asparagine; by host glycosylation sites follow: Asn-794, Asn-896, Asn-993, and Asn-1027. A helical transmembrane segment spans residues 1139 to 1159 (LFLTILAMALFGLPNLFSSVG). Over 1160-1178 (LSAWVLLVASSSAQPQDLS) the chain is Cytoplasmic. Residues 1179 to 1199 (MNLWIVLQTGSSAVLLLGYMI) traverse the membrane as a helical segment. Topologically, residues 1200-1204 (RRKLA) are lumenal. Residues 1205-1225 (MVLGVHHLVTLMCVQFLFSAV) form a helical membrane-spanning segment. The Cytoplasmic portion of the chain corresponds to 1226 to 1231 (DRYQKY). The helical transmembrane segment at 1232-1252 (LYGLLELMASVVLLSAYKSVL) threads the bilayer. Residues 1253-1261 (QALPPEVLC) are Lumenal-facing. The helical transmembrane segment at 1262–1282 (FSLVMGWKTALSLATVVFLIF) threads the bilayer. The Cytoplasmic portion of the chain corresponds to 1283–1303 (SLNAMYKYACQYHNPRNGYRD). The helical transmembrane segment at 1304 to 1324 (SGANLWFWTVSLASAGGIWAA) threads the bilayer. Residues 1325 to 1326 (EK) lie on the Lumenal side of the membrane. Residues 1327–1347 (AHQPTVAAVLAFTMVVLFLYM) form a helical membrane-spanning segment. Over 1348–1403 (EQTNVSMELEFISAGETPEGVSTENDDGINIPDLKGRYGEDGIVVGAASSSGYLPE) the chain is Cytoplasmic. Positions 1404 to 1424 (LVFVFLLGFAVTSTSYFLGAL) form an intramembrane region, helical. Over 1425 to 2089 (YLLIATSTNL…TERSLTVVMA (665 aa)) the chain is Cytoplasmic. The 179-residue stretch at 1452 to 1630 (SDDLLGLGGP…KPTDVTESLN (179 aa)) folds into the Peptidase S7 domain. Active-site charge relay system; for serine protease NS3 activity residues include His-1506, Asp-1530, and Ser-1589. Positions 1627–1780 (ESLNCDSTRR…SNYAISDQSI (154 aa)) constitute a Helicase ATP-binding domain. 1640–1647 (WHPGKGKT) provides a ligand contact to ATP. The DECH box signature appears at 1729-1732 (DECH). In terms of domain architecture, Helicase C-terminal spans 1793 to 1947 (NVQKSVGAKK…TFMLEEAAYS (155 aa)). Residues 2090-2110 (FVLGVSIMLSCFIAVWALCFL) traverse the membrane as a helical segment. At 2111-2145 (FSLFRPKKATYEQMPSSDPLSGGVLVSTPSVLYCM) the chain is on the lumenal side. Residues 2146–2166 (GVPLGFCVVITLAMFLVYPVL) traverse the membrane as a helical segment. Residues 2167-2178 (YKSIGNRSYMDS) lie on the Cytoplasmic side of the membrane. Residues 2179-2199 (DLVKWVILGSCLICGVLAWEM) traverse the membrane as a helical segment. Residues 2200 to 2242 (RMFPNIRSDLMELVKAVKEPEEVVNSGPSFPSWEIAQGKGATM) are Lumenal-facing. A helical transmembrane segment spans residues 2243 to 2263 (LDSLQVFFFITVLSTKFLYWF). Over 2264–2302 (QENWTARMYAMKHPEMVSSIGGFRFDEIPFRAVLPSGFA) the chain is Cytoplasmic. Positions 2303 to 2323 (IVAIASLPSVVVGLLAAGVFM) form an intramembrane region, helical. The Cytoplasmic portion of the chain corresponds to 2324 to 2366 (AIMYCQNKWNATPKILTALDARDQRHDRPTEITSRVPLENTRS). A helical transmembrane segment spans residues 2367-2387 (IMYAFCLIFSLFWAFCTRSPG). The Lumenal portion of the chain corresponds to 2388-2412 (DFLRGSLVVGASMWQILHPRSKIHD). The chain crosses the membrane as a helical span at residues 2413 to 2433 (VMDFGSMVSAIGLLEMNYLFY). The Cytoplasmic portion of the chain corresponds to 2434–3341 (RFMHIAARAL…SRYRRGNDVI (908 aa)). The mRNA cap 0-1 NS5-type MT domain maps to 2454-2706 (ALEKSTTIGL…SPVLPKGTRA (253 aa)). Ser-2497 contributes to the S-adenosyl-L-methionine binding site. The For 2'-O-MTase activity role is filled by Lys-2509. Positions 2527, 2528, 2545, 2546, 2572, and 2573 each coordinate S-adenosyl-L-methionine. Catalysis depends on Asp-2587, which acts as the For 2'-O-MTase activity. Residue Ile-2588 coordinates S-adenosyl-L-methionine. Catalysis depends on for 2'-O-MTase activity residues Lys-2624 and Glu-2660. S-adenosyl-L-methionine is bound at residue Tyr-2662. Residues Glu-2881, His-2885, Cys-2890, and Cys-2893 each coordinate Zn(2+). Positions 2970–3117 (KYLIADDIAG…STDNRDFSSA (148 aa)) constitute a RdRp catalytic domain. Residues His-3152, Cys-3168, and Cys-3287 each contribute to the Zn(2+) site.

The protein in the N-terminal section; belongs to the class I-like SAM-binding methyltransferase superfamily. mRNA cap 0-1 NS5-type methyltransferase family. In terms of assembly, homodimer. As to quaternary structure, forms heterodimers with envelope protein E in the endoplasmic reticulum and Golgi. Homodimer; in the endoplasmic reticulum and Golgi. In terms of assembly, forms homodimers as well as homohexamers. NS1 may interact with NS4A. As to quaternary structure, forms a heterodimer with serine protease NS3. May form homooligomers. Forms a heterodimer with NS2B. Interacts with NS4B. Interacts with unphosphorylated RNA-directed RNA polymerase NS5; this interaction stimulates RNA-directed RNA polymerase NS5 guanylyltransferase activity. In terms of assembly, interacts with serine protease NS3. As to quaternary structure, interacts with host STAT2; this interaction inhibits the phosphorylation of the latter, and, when all viral proteins are present (polyprotein), targets STAT2 for degradation. Genome polyprotein: Specific enzymatic cleavages in vivo yield mature proteins. Cleavages in the lumen of endoplasmic reticulum are performed by host signal peptidase, whereas cleavages in the cytoplasmic side are performed by serine protease NS3. Signal cleavage at the 2K-4B site requires a prior NS3 protease-mediated cleavage at the 4A-2K site. In terms of processing, cleaved in post-Golgi vesicles by a host furin, releasing the mature small envelope protein M, and peptide pr. This cleavage is incomplete as up to 30% of viral particles still carry uncleaved prM. Post-translationally, N-glycosylated. N-glycosylated. The excreted form is glycosylated and this is required for efficient secretion of the protein from infected cells. In terms of processing, phosphorylated on serines residues. This phosphorylation may trigger NS5 nuclear localization.

The protein localises to the virion. It localises to the host nucleus. Its subcellular location is the secreted. The protein resides in the virion membrane. It is found in the host endoplasmic reticulum membrane. It carries out the reaction Selective hydrolysis of -Xaa-Xaa-|-Yaa- bonds in which each of the Xaa can be either Arg or Lys and Yaa can be either Ser or Ala.. It catalyses the reaction RNA(n) + a ribonucleoside 5'-triphosphate = RNA(n+1) + diphosphate. The enzyme catalyses a ribonucleoside 5'-triphosphate + H2O = a ribonucleoside 5'-diphosphate + phosphate + H(+). The catalysed reaction is ATP + H2O = ADP + phosphate + H(+). It carries out the reaction a 5'-end (5'-triphosphoguanosine)-ribonucleoside in mRNA + S-adenosyl-L-methionine = a 5'-end (N(7)-methyl 5'-triphosphoguanosine)-ribonucleoside in mRNA + S-adenosyl-L-homocysteine. It catalyses the reaction a 5'-end (N(7)-methyl 5'-triphosphoguanosine)-ribonucleoside in mRNA + S-adenosyl-L-methionine = a 5'-end (N(7)-methyl 5'-triphosphoguanosine)-(2'-O-methyl-ribonucleoside) in mRNA + S-adenosyl-L-homocysteine + H(+). Functionally, plays a role in virus budding by binding to the cell membrane and gathering the viral RNA into a nucleocapsid that forms the core of a mature virus particle. During virus entry, may induce genome penetration into the host cytoplasm after hemifusion induced by the surface proteins. Can migrate to the cell nucleus where it modulates host functions. Its function is as follows. Prevents premature fusion activity of envelope proteins in trans-Golgi by binding to envelope protein E at pH6.0. After virion release in extracellular space, gets dissociated from E dimers. Acts as a chaperone for envelope protein E during intracellular virion assembly by masking and inactivating envelope protein E fusion peptide. prM is the only viral peptide matured by host furin in the trans-Golgi network probably to avoid catastrophic activation of the viral fusion activity in acidic Golgi compartment prior to virion release. prM-E cleavage is inefficient, and many virions are only partially matured. These uncleaved prM would play a role in immune evasion. In terms of biological role, may play a role in virus budding. Exerts cytotoxic effects by activating a mitochondrial apoptotic pathway through M ectodomain. May display a viroporin activity. Functionally, binds to host cell surface receptor and mediates fusion between viral and cellular membranes. Envelope protein is synthesized in the endoplasmic reticulum in the form of heterodimer with protein prM. They play a role in virion budding in the ER, and the newly formed immature particle is covered with 60 spikes composed of heterodimer between precursor prM and envelope protein E. The virion is transported to the Golgi apparatus where the low pH causes dissociation of PrM-E heterodimers and formation of E homodimers. prM-E cleavage is inefficient, and many virions are only partially matured. These uncleaved prM would play a role in immune evasion. Its function is as follows. Involved in immune evasion, pathogenesis and viral replication. Once cleaved off the polyprotein, is targeted to three destinations: the viral replication cycle, the plasma membrane and the extracellular compartment. May play a role in viral genome replication. Assist membrane bending and envelopment of genomic RNA at the endoplasmic reticulum. Excreted as a hexameric lipoparticle that plays a role against host immune response. Component of the viral RNA replication complex that functions in virion assembly and antagonizes the host immune response. In terms of biological role, required cofactor for the serine protease function of NS3. May have membrane-destabilizing activity and form viroporins. Functionally, displays three enzymatic activities: serine protease, NTPase and RNA helicase. NS3 serine protease, in association with NS2B, performs its autocleavage and cleaves the polyprotein at dibasic sites in the cytoplasm: C-prM, NS2A-NS2B, NS2B-NS3, NS3-NS4A, NS4A-2K and NS4B-NS5. NS3 RNA helicase binds RNA and unwinds dsRNA in the 3' to 5' direction. Its function is as follows. Regulates the ATPase activity of the NS3 helicase activity. NS4A allows NS3 helicase to conserve energy during unwinding. Functions as a signal peptide for NS4B and is required for the interferon antagonism activity of the latter. In terms of biological role, inhibits interferon (IFN)-induced host STAT1 phosphorylation and nuclear translocation, thereby preventing the establishment of a cellular antiviral state by blocking the IFN-alpha/beta pathway. Functionally, replicates the viral (+) and (-) RNA genome, and performs the capping of genomes in the cytoplasm. NS5 methylates viral RNA cap at guanine N-7 and ribose 2'-O positions. Besides its role in RNA genome replication, also prevents the establishment of cellular antiviral state by blocking the interferon-alpha/beta (IFN-alpha/beta) signaling pathway. Inhibits host TYK2 and STAT2 phosphorylation, thereby preventing activation of JAK-STAT signaling pathway. The protein is Genome polyprotein of Aedes (CFA flavivirus).